Reading from the N-terminus, the 399-residue chain is Phosphoglycerate kinase (399 aa).

Substrate-binding positions include 22–24 (DFN), Arg-38, 61–64 (HLGR), Arg-120, and Arg-153. Residues Lys-204, Glu-326, and 353-356 (GGDT) each bind ATP.

The protein belongs to the phosphoglycerate kinase family. As to quaternary structure, monomer.

Its subcellular location is the cytoplasm. It catalyses the reaction (2R)-3-phosphoglycerate + ATP = (2R)-3-phospho-glyceroyl phosphate + ADP. Its pathway is carbohydrate degradation; glycolysis; pyruvate from D-glyceraldehyde 3-phosphate: step 2/5. In Geotalea daltonii (strain DSM 22248 / JCM 15807 / FRC-32) (Geobacter daltonii), this protein is Phosphoglycerate kinase.